The primary structure comprises 792 residues: Probable CoA-transferase Rv1866 (792 aa).

Asp-558 (nucleophile) is an active-site residue.

This sequence belongs to the CoA-transferase III family.

Probable CoA-transferase. The sequence is that of Probable CoA-transferase Rv1866 from Mycobacterium tuberculosis (strain ATCC 25618 / H37Rv).